The primary structure comprises 68 residues: Large ribosomal subunit protein bL35 (68 aa).

It belongs to the bacterial ribosomal protein bL35 family.

The sequence is that of Large ribosomal subunit protein bL35 from Rickettsia typhi (strain ATCC VR-144 / Wilmington).